Here is a 660-residue protein sequence, read N- to C-terminus: Bifunctional polymyxin resistance protein ArnA (660 aa).

Residues 1-304 (MKAVIFAYHD…TLGLVAGARL (304 aa)) are formyltransferase ArnAFT. His-104 functions as the Proton donor; for formyltransferase activity in the catalytic mechanism. (6R)-10-formyltetrahydrofolate-binding positions include Arg-114 and 136–140 (VKRAD). The interval 314–660 (RRIRVLILGV…RSVDVAERAS (347 aa)) is dehydrogenase ArnADH. NAD(+)-binding positions include Asp-347 and 368–369 (DI). UDP-alpha-D-glucuronate is bound by residues Ala-393, Tyr-398, and 432–433 (TS). Residue Glu-434 is the Proton acceptor; for decarboxylase activity of the active site. Residues Arg-460, Asn-492, 526-535 (KLIDGGQQKR), and Tyr-613 contribute to the UDP-alpha-D-glucuronate site. The active-site Proton donor; for decarboxylase activity is the Arg-619.

The protein in the N-terminal section; belongs to the Fmt family. UDP-L-Ara4N formyltransferase subfamily. It in the C-terminal section; belongs to the NAD(P)-dependent epimerase/dehydratase family. UDP-glucuronic acid decarboxylase subfamily. As to quaternary structure, homohexamer, formed by a dimer of trimers.

It catalyses the reaction UDP-alpha-D-glucuronate + NAD(+) = UDP-beta-L-threo-pentopyranos-4-ulose + CO2 + NADH. It carries out the reaction UDP-4-amino-4-deoxy-beta-L-arabinose + (6R)-10-formyltetrahydrofolate = UDP-4-deoxy-4-formamido-beta-L-arabinose + (6S)-5,6,7,8-tetrahydrofolate + H(+). The protein operates within nucleotide-sugar biosynthesis; UDP-4-deoxy-4-formamido-beta-L-arabinose biosynthesis; UDP-4-deoxy-4-formamido-beta-L-arabinose from UDP-alpha-D-glucuronate: step 1/3. It functions in the pathway nucleotide-sugar biosynthesis; UDP-4-deoxy-4-formamido-beta-L-arabinose biosynthesis; UDP-4-deoxy-4-formamido-beta-L-arabinose from UDP-alpha-D-glucuronate: step 3/3. Its pathway is bacterial outer membrane biogenesis; lipopolysaccharide biosynthesis. Its function is as follows. Bifunctional enzyme that catalyzes the oxidative decarboxylation of UDP-glucuronic acid (UDP-GlcUA) to UDP-4-keto-arabinose (UDP-Ara4O) and the addition of a formyl group to UDP-4-amino-4-deoxy-L-arabinose (UDP-L-Ara4N) to form UDP-L-4-formamido-arabinose (UDP-L-Ara4FN). The modified arabinose is attached to lipid A and is required for resistance to polymyxin and cationic antimicrobial peptides. The sequence is that of Bifunctional polymyxin resistance protein ArnA from Salmonella dublin (strain CT_02021853).